A 328-amino-acid polypeptide reads, in one-letter code: MDRHNHVVFSLSKTHDLVSRICQKLKMPMGLITHNEFADGETYIRFEESVRNKDVFIFQSTCAPVNDSLMELLIAIDALKRGSAKSITAILPYYGYARQDRKTMGREPITSKLVADLLTTAGVSRVALTDIHSDQTQGFFNIPVDTLRTYHVFLTRTVELLGKKDLVVVSPDYGGVKRARLIATSLELPLAIIDKRRPAHNVAESINVLGEVANKNCLIVDDMIDTGGTVIAAAKLLREHHAKKVCVMATHGLFNGEAPQRFQKAFNEGLVDYLFVSNSIPQTKFDQCPQFQVIDLAPLFEEVLLCYANNSSISAIYTRHIEWIKKHV.

ATP contacts are provided by residues 39-41 (DGE) and 98-99 (RQ). Mg(2+) contacts are provided by H132 and D172. Residue K195 is part of the active site. Residues R197, D221, and 225–229 (DTGGT) contribute to the D-ribose 5-phosphate site.

It belongs to the ribose-phosphate pyrophosphokinase family. Class I subfamily. Homohexamer. Mg(2+) serves as cofactor.

The protein resides in the cytoplasm. It carries out the reaction D-ribose 5-phosphate + ATP = 5-phospho-alpha-D-ribose 1-diphosphate + AMP + H(+). It functions in the pathway metabolic intermediate biosynthesis; 5-phospho-alpha-D-ribose 1-diphosphate biosynthesis; 5-phospho-alpha-D-ribose 1-diphosphate from D-ribose 5-phosphate (route I): step 1/1. Its function is as follows. Involved in the biosynthesis of the central metabolite phospho-alpha-D-ribosyl-1-pyrophosphate (PRPP) via the transfer of pyrophosphoryl group from ATP to 1-hydroxyl of ribose-5-phosphate (Rib-5-P). The protein is Ribose-phosphate pyrophosphokinase of Mycoplasma pneumoniae (strain ATCC 29342 / M129 / Subtype 1) (Mycoplasmoides pneumoniae).